The following is a 156-amino-acid chain: Endogenous retrovirus group K member 10 Pro protein (156 aa).

One can recognise a Peptidase A2 domain in the interval Phe-21 to Leu-96. Residue Asp-26 is part of the active site. The 46-residue stretch at Tyr-111–Phe-156 folds into the G-patch domain.

The protein belongs to the peptidase A2 family. HERV class-II K(HML-2) subfamily. Active as a homodimer. In terms of processing, autoproteolytically processed at the N-terminus. Expected C-terminal autoprocessing not detected. The sequence shown is that of the processed Pro protein.

The enzyme catalyses Processing at the authentic HIV-1 PR recognition site and release of the mature p17 matrix and the p24 capsid protein, as a result of the cleavage of the -SQNY-|-PIVQ- cleavage site.. With respect to regulation, resistant to a number of clinically useful HIV-1 PR inhibitors. Inhibited by cyclic urea SD146. Functionally, retroviral proteases have roles in processing of the primary translation products and the maturation of the viral particle. Endogenous Pro proteins may have kept, lost or modified their original function during evolution. This endogenous protein has retained most of the characteristics of retroviral proteases. The polypeptide is Endogenous retrovirus group K member 10 Pro protein (ERVK-10) (Homo sapiens (Human)).